We begin with the raw amino-acid sequence, 421 residues long: D-amino acid dehydrogenase (421 aa).

3-17 (VIVLGSGVIGVASAY) is a binding site for FAD.

Belongs to the DadA oxidoreductase family. Requires FAD as cofactor.

The catalysed reaction is a D-alpha-amino acid + A + H2O = a 2-oxocarboxylate + AH2 + NH4(+). It functions in the pathway amino-acid degradation; D-alanine degradation; NH(3) and pyruvate from D-alanine: step 1/1. Functionally, oxidative deamination of D-amino acids. The sequence is that of D-amino acid dehydrogenase from Acinetobacter baumannii (strain ATCC 17978 / DSM 105126 / CIP 53.77 / LMG 1025 / NCDC KC755 / 5377).